The primary structure comprises 128 residues: MNLIEQIEQEEIKRLTANKTIPPFAPGDTVIVNVNVVEGNRKRVQAYEGVVIAKRNRGLNSSFIVRKISSGEGVERTFQLYSPLLASIEVKRRGDVRRAKLYYLRERSGKSARIKEKLSFKRKEVAAQ.

The protein belongs to the bacterial ribosomal protein bL19 family.

Functionally, this protein is located at the 30S-50S ribosomal subunit interface and may play a role in the structure and function of the aminoacyl-tRNA binding site. The sequence is that of Large ribosomal subunit protein bL19 from Ralstonia nicotianae (strain ATCC BAA-1114 / GMI1000) (Ralstonia solanacearum).